The chain runs to 40 residues: Proteinase inhibitor IIB (40 aa).

3 disulfide bridges follow: C2-C16, C6-C28, and C12-C38.

Belongs to the protease inhibitor I20 (potato type II proteinase inhibitor) family.

The protein localises to the secreted. Its function is as follows. Inhibits chymotrypsin and subtilisin strongly. This chain is Proteinase inhibitor IIB, found in Solanum tuberosum (Potato).